Consider the following 552-residue polypeptide: CTP synthase (552 aa).

The segment at 1 to 267 (MAKFIFVTGG…AEQTLKLLRM (267 aa)) is amidoligase domain. S13 contributes to the CTP binding site. S13 contacts UTP. ATP-binding positions include 14 to 19 (SIGKGI) and D71. Mg(2+) contacts are provided by D71 and E141. Residues 148–150 (DIE), 188–193 (KTKPTQ), and K224 each bind CTP. Residues 188-193 (KTKPTQ) and K224 each bind UTP. The region spanning 292-534 (DIAIVGKYVQ…IQAAGNHKSQ (243 aa)) is the Glutamine amidotransferase type-1 domain. Position 354 (G354) interacts with L-glutamine. The Nucleophile; for glutamine hydrolysis role is filled by C381. L-glutamine contacts are provided by residues 382 to 385 (LGMQ), E405, and R462. Residues H507 and E509 contribute to the active site. A disordered region spans residues 533–552 (SQPISDELDNQSTEMSISLS).

The protein belongs to the CTP synthase family. Homotetramer.

It catalyses the reaction UTP + L-glutamine + ATP + H2O = CTP + L-glutamate + ADP + phosphate + 2 H(+). The catalysed reaction is L-glutamine + H2O = L-glutamate + NH4(+). The enzyme catalyses UTP + NH4(+) + ATP = CTP + ADP + phosphate + 2 H(+). The protein operates within pyrimidine metabolism; CTP biosynthesis via de novo pathway; CTP from UDP: step 2/2. Its activity is regulated as follows. Allosterically activated by GTP, when glutamine is the substrate; GTP has no effect on the reaction when ammonia is the substrate. The allosteric effector GTP functions by stabilizing the protein conformation that binds the tetrahedral intermediate(s) formed during glutamine hydrolysis. Inhibited by the product CTP, via allosteric rather than competitive inhibition. Functionally, catalyzes the ATP-dependent amination of UTP to CTP with either L-glutamine or ammonia as the source of nitrogen. Regulates intracellular CTP levels through interactions with the four ribonucleotide triphosphates. The protein is CTP synthase of Picosynechococcus sp. (strain ATCC 27264 / PCC 7002 / PR-6) (Agmenellum quadruplicatum).